Consider the following 373-residue polypeptide: MTQNTKLRPITPEFDPWEAYMDVDQYGDMQLTNVEFTTTTLCNMRCEHCAVGYTLQPKDPNALPIDLLLKRLEEIPRLRSISITGGEPMLSLKSVKEYVVPLLKYAHERGVRTQINSNLTLDIERYEWIIPYLDVLHISHNWGTVEDFAEIGFAMMDRKPTFEQRARYFEKMIENSRTLVDAGVMVSAETMLNKRTLPHIEHIHRQITEDMKCQRHEVHPMYPSDFASALESLSLKEMRQAIHRLLDIRDENTWMLFGTLPFYACSPDEDDQKLLRRLRAAKNVTVRNDPDGRSRLNVNIFDGNIIVTDFGDTPPLGNIQTDSLPSAYEKWRETKLAKELSCHCPNVRCLGPNVLVKNSYYQDTDFTKRQARS.

The Radical SAM core domain occupies 26-256 (YGDMQLTNVE…DIRDENTWML (231 aa)). Cysteine 42, cysteine 46, and cysteine 49 together coordinate [4Fe-4S] cluster.

The protein belongs to the radical SAM superfamily. Requires [4Fe-4S] cluster as cofactor.

The protein is Putative protein YfkA (yfkA) of Bacillus subtilis (strain 168).